The chain runs to 546 residues: Tryptophan biosynthesis protein TrpCD (546 aa).

The interval 1–226 (MMDFGFVDSL…FVQTVCGGEK (226 aa)) is indole-3-glycerol phosphate synthase. An anthranilate phosphoribosyltransferase region spans residues 227–546 (MIEDVLRGLD…EEIACKSTSM (320 aa)). 5-phospho-alpha-D-ribose 1-diphosphate-binding positions include glycine 295, 298-299 (GD), serine 303, 305-308 (NVST), 322-330 (KHGNRAVSS), and serine 334. Glycine 295 provides a ligand contact to anthranilate. Serine 307 contacts Mg(2+). An anthranilate-binding site is contributed by asparagine 325. Arginine 380 contributes to the anthranilate binding site. Mg(2+) contacts are provided by aspartate 437 and glutamate 438.

In the N-terminal section; belongs to the TrpC family. It in the C-terminal section; belongs to the anthranilate phosphoribosyltransferase family. Mg(2+) is required as a cofactor.

It carries out the reaction 1-(2-carboxyphenylamino)-1-deoxy-D-ribulose 5-phosphate + H(+) = (1S,2R)-1-C-(indol-3-yl)glycerol 3-phosphate + CO2 + H2O. The catalysed reaction is N-(5-phospho-beta-D-ribosyl)anthranilate + diphosphate = 5-phospho-alpha-D-ribose 1-diphosphate + anthranilate. It functions in the pathway amino-acid biosynthesis; L-tryptophan biosynthesis; L-tryptophan from chorismate: step 2/5. It participates in amino-acid biosynthesis; L-tryptophan biosynthesis; L-tryptophan from chorismate: step 4/5. Its function is as follows. Bifunctional enzyme that catalyzes the second and fourth steps of tryptophan biosynthetic pathway. The second step is catalyzed by the anthranilate phosphoribosyltransferase, coded by the TrpD domain and the fourth step is catalyzed by indole-3-glycerol phosphate synthase, coded by the TrpC domain. In Archaeoglobus fulgidus (strain ATCC 49558 / DSM 4304 / JCM 9628 / NBRC 100126 / VC-16), this protein is Tryptophan biosynthesis protein TrpCD (trpCD).